The chain runs to 54 residues: Large ribosomal subunit protein bL32c (54 aa).

The protein belongs to the bacterial ribosomal protein bL32 family.

It localises to the plastid. The protein resides in the chloroplast. This chain is Large ribosomal subunit protein bL32c, found in Cucumis sativus (Cucumber).